The following is a 143-amino-acid chain: Small ribosomal subunit protein bS6 (143 aa).

Residues 96–143 are disordered; it reads VTEASPMAAAKEERRDDRREVKKDVAAAPVEAKEDSVEEKSEEAASEE. The segment covering 105 to 143 has biased composition (basic and acidic residues); the sequence is AKEERRDDRREVKKDVAAAPVEAKEDSVEEKSEEAASEE.

It belongs to the bacterial ribosomal protein bS6 family.

Its function is as follows. Binds together with bS18 to 16S ribosomal RNA. The protein is Small ribosomal subunit protein bS6 of Colwellia psychrerythraea (strain 34H / ATCC BAA-681) (Vibrio psychroerythus).